The chain runs to 429 residues: Histidine--tRNA ligase (429 aa).

It belongs to the class-II aminoacyl-tRNA synthetase family. As to quaternary structure, homodimer.

The protein resides in the cytoplasm. The enzyme catalyses tRNA(His) + L-histidine + ATP = L-histidyl-tRNA(His) + AMP + diphosphate + H(+). This chain is Histidine--tRNA ligase, found in Pseudomonas aeruginosa (strain LESB58).